A 211-amino-acid polypeptide reads, in one-letter code: Pyridoxine/pyridoxamine 5'-phosphate oxidase (211 aa).

Substrate-binding positions include 7 to 10 and lysine 65; that span reads RREY. FMN-binding positions include 60–65, 75–76, lysine 82, and glutamine 104; these read RIVLLK and FT. 3 residues coordinate substrate: tyrosine 122, arginine 126, and serine 130. Residues 139 to 140 and tryptophan 184 contribute to the FMN site; that span reads QS. Residue 190-192 participates in substrate binding; the sequence is RLH. Arginine 194 serves as a coordination point for FMN.

Belongs to the pyridoxamine 5'-phosphate oxidase family. In terms of assembly, homodimer. The cofactor is FMN.

It carries out the reaction pyridoxamine 5'-phosphate + O2 + H2O = pyridoxal 5'-phosphate + H2O2 + NH4(+). The enzyme catalyses pyridoxine 5'-phosphate + O2 = pyridoxal 5'-phosphate + H2O2. It functions in the pathway cofactor metabolism; pyridoxal 5'-phosphate salvage; pyridoxal 5'-phosphate from pyridoxamine 5'-phosphate: step 1/1. It participates in cofactor metabolism; pyridoxal 5'-phosphate salvage; pyridoxal 5'-phosphate from pyridoxine 5'-phosphate: step 1/1. Catalyzes the oxidation of either pyridoxine 5'-phosphate (PNP) or pyridoxamine 5'-phosphate (PMP) into pyridoxal 5'-phosphate (PLP). The sequence is that of Pyridoxine/pyridoxamine 5'-phosphate oxidase from Teredinibacter turnerae (strain ATCC 39867 / T7901).